A 367-amino-acid chain; its full sequence is tRNA-specific 2-thiouridylase MnmA (367 aa).

ATP contacts are provided by residues 12-19 and Met-38; that span reads GMSGGVDS. The interval 98 to 100 is interaction with target base in tRNA; that stretch reads NPD. Residue Cys-103 is the Nucleophile of the active site. Residues Cys-103 and Cys-200 are joined by a disulfide bond. Gly-128 is an ATP binding site. Residues 150-152 are interaction with tRNA; that stretch reads KDQ. Catalysis depends on Cys-200, which acts as the Cysteine persulfide intermediate. The interval 312–313 is interaction with tRNA; sequence RY.

The protein belongs to the MnmA/TRMU family. Interacts with TusE.

It is found in the cytoplasm. It catalyses the reaction S-sulfanyl-L-cysteinyl-[protein] + uridine(34) in tRNA + AH2 + ATP = 2-thiouridine(34) in tRNA + L-cysteinyl-[protein] + A + AMP + diphosphate + H(+). Its function is as follows. Catalyzes the 2-thiolation of uridine at the wobble position (U34) of tRNA(Lys), tRNA(Glu) and tRNA(Gln), leading to the formation of s(2)U34, the first step of tRNA-mnm(5)s(2)U34 synthesis. Sulfur is provided by IscS, via a sulfur-relay system. Binds ATP and its substrate tRNAs. In Serratia proteamaculans (strain 568), this protein is tRNA-specific 2-thiouridylase MnmA.